A 130-amino-acid chain; its full sequence is Small ribosomal subunit protein uS9 (130 aa).

Belongs to the universal ribosomal protein uS9 family.

This Burkholderia multivorans (strain ATCC 17616 / 249) protein is Small ribosomal subunit protein uS9.